A 339-amino-acid polypeptide reads, in one-letter code: Glycerol-3-phosphate dehydrogenase [NAD(P)+] (339 aa).

The NADPH site is built by serine 15, tyrosine 16, histidine 36, and lysine 110. Sn-glycerol 3-phosphate-binding residues include lysine 110, glycine 139, and threonine 141. Residue alanine 143 coordinates NADPH. Lysine 195, aspartate 248, serine 258, arginine 259, and asparagine 260 together coordinate sn-glycerol 3-phosphate. Lysine 195 functions as the Proton acceptor in the catalytic mechanism. Position 259 (arginine 259) interacts with NADPH. NADPH contacts are provided by valine 283 and glutamate 285.

The protein belongs to the NAD-dependent glycerol-3-phosphate dehydrogenase family.

It localises to the cytoplasm. It catalyses the reaction sn-glycerol 3-phosphate + NAD(+) = dihydroxyacetone phosphate + NADH + H(+). It carries out the reaction sn-glycerol 3-phosphate + NADP(+) = dihydroxyacetone phosphate + NADPH + H(+). Its pathway is membrane lipid metabolism; glycerophospholipid metabolism. Catalyzes the reduction of the glycolytic intermediate dihydroxyacetone phosphate (DHAP) to sn-glycerol 3-phosphate (G3P), the key precursor for phospholipid synthesis. The protein is Glycerol-3-phosphate dehydrogenase [NAD(P)+] of Citrobacter koseri (strain ATCC BAA-895 / CDC 4225-83 / SGSC4696).